We begin with the raw amino-acid sequence, 607 residues long: Oligoendopeptidase F homolog (607 aa).

Zn(2+) is bound at residue H384. The active site involves E385. Residues H388 and H391 each contribute to the Zn(2+) site.

Belongs to the peptidase M3B family. It depends on Zn(2+) as a cofactor.

The protein is Oligoendopeptidase F homolog (pepF) of Mycoplasma genitalium (strain ATCC 33530 / DSM 19775 / NCTC 10195 / G37) (Mycoplasmoides genitalium).